The chain runs to 292 residues: BTB/POZ domain-containing protein KCTD7 (292 aa).

Positions 1–27 (MVVFSAASDSEKPGDAMSGADKGEEEY) are disordered. Positions 56 to 144 (IPLNVGGTYF…YAIGPLLENL (89 aa)) constitute a BTB domain.

The protein localises to the cell membrane. It is found in the cytoplasm. The protein resides in the cytosol. The polypeptide is BTB/POZ domain-containing protein KCTD7 (kctd7) (Danio rerio (Zebrafish)).